The primary structure comprises 416 residues: Phosphoglycerate kinase 2 (416 aa).

Residues 28–30 (DMN), Arg44, 65–68 (HQSR), Arg122, and Arg162 contribute to the substrate site. ATP-binding positions include Glu337 and 362-365 (GGHI).

Belongs to the phosphoglycerate kinase family. As to quaternary structure, monomer.

It is found in the cytoplasm. The enzyme catalyses (2R)-3-phosphoglycerate + ATP = (2R)-3-phospho-glyceroyl phosphate + ADP. It participates in carbohydrate degradation; glycolysis; pyruvate from D-glyceraldehyde 3-phosphate: step 2/5. The chain is Phosphoglycerate kinase 2 from Methanosarcina acetivorans (strain ATCC 35395 / DSM 2834 / JCM 12185 / C2A).